The following is a 1007-amino-acid chain: Rho-type GTPase-activating protein 1 (1007 aa).

LIM zinc-binding domains follow at residues 13–66 and 70–122; these read CVRC…CFDC and CKNC…CLSC. 3 disordered regions span residues 203–293, 401–478, and 505–600; these read ITGY…KSPS, EKYS…STSL, and KETA…NDPS. Positions 212-221 are enriched in low complexity; sequence NSGSSKFGSN. Polar residues-rich tracts occupy residues 250-261 and 270-293; these read ANMSLNVATDPT and HSRNLLNKTPLRNSSGQYLAKSPS. T278 is subject to Phosphothreonine. At S291 the chain carries Phosphoserine. The span at 411–421 shows a compositional bias: basic residues; the sequence is KGRKISRSLSR. A compositionally biased stretch (basic and acidic residues) spans 454–466; the sequence is RSQDLMRDNDSHT. 2 stretches are compositionally biased toward polar residues: residues 467-478 and 529-579; these read GLDTPNSNSTSL and SPAT…LENS. T532 is modified (phosphothreonine). Positions 583 to 600 are enriched in basic and acidic residues; that stretch reads EEQKETLYENSESRNDPS. The region spanning 791 to 1006 is the Rho-GAP domain; sequence SSLVARCNYE…FIFGNYKDIL (216 aa).

In terms of biological role, GTPase-activating protein (GAP) for CDC42 and/or RHO1. Negative regulator of the pheromone-response pathway through the STE20 protein kinase; acts at a step between the G-protein and the MAP kinase module. Dominant suppressor of bud emergence defect caused by deletion of IPL2/BEM2. Involved in the control of polarized cell growth and proper bud site selection. The sequence is that of Rho-type GTPase-activating protein 1 (RGA1) from Saccharomyces cerevisiae (strain ATCC 204508 / S288c) (Baker's yeast).